Consider the following 261-residue polypeptide: Acidic leucine-rich nuclear phosphoprotein 32 family member A (261 aa).

4 LRR repeats span residues 16-37 (QITELNLDNCRSTSIVGLTDEY), 39-60 (ALESLSLINVGLTTLKGFPKLP), 61-83 (NLKKLELSDNRISSGLNYLTTSP), and 84-105 (KLQYLNLSGNKIKDLETLKPLE). Residues 118–156 (NDATQVDNYREKIFKMLPSLNFLDGFDCNDEEVQSDGDD) enclose the LRRCT domain. Acidic residues-rich tracts occupy residues 145–185 (CNDE…EEAN) and 194–229 (YNDDLEEDNSDWEGEDEAGEEDEEEDSDIDDADGDA). The segment at 145 to 261 (CNDEEVQSDG…VRGKKRKHDG (117 aa)) is disordered. A compositionally biased stretch (basic and acidic residues) spans 238-252 (AKDKDGEKEADESQV).

It belongs to the ANP32 family. In terms of processing, phosphorylated on serine residues.

It is found in the nucleus. Its subcellular location is the cytoplasm. In terms of biological role, implicated in a number of cellular processes, including proliferation, differentiation, caspase-dependent and caspase-independent apoptosis, suppression of transformation (tumor suppressor), inhibition of protein phosphatase 2A, regulation of mRNA trafficking and stability, and inhibition of acetyltransferases as part of the INHAT (inhibitor of histone acetyltransferases) complex. The sequence is that of Acidic leucine-rich nuclear phosphoprotein 32 family member A (Anp32a) from Drosophila melanogaster (Fruit fly).